Reading from the N-terminus, the 921-residue chain is GPI ethanolamine phosphate transferase 1 (921 aa).

A helical membrane pass occupies residues 37–57 (PGHVALIAGLYEDVSAVTTGW). 2 N-linked (GlcNAc...) asparagine glycosylation sites follow: asparagine 69 and asparagine 132. Helical transmembrane passes span 386-406 (ALIT…VIDL), 418-438 (TLIG…SFAI), 441-461 (SPLT…EVYA), 483-503 (FVSL…LALG), 509-529 (ILTI…FSFL), 533-553 (MALS…TLLP), 561-581 (VNMI…YLIL), 606-626 (LVGI…SSAL), 640-660 (VMGW…RAKP), and 679-699 (FVIL…AVLV). The interval 715–737 (SANGAARSAPSPAKPHNLETSQT) is disordered. Helical transmembrane passes span 752–772 (VALF…NVAS), 795–815 (AMLI…LGIL), 825–845 (ALFM…FWVV), and 862–882 (VIAS…AMFI).

It belongs to the PIGG/PIGN/PIGO family. PIGN subfamily.

It localises to the endoplasmic reticulum membrane. It functions in the pathway glycolipid biosynthesis; glycosylphosphatidylinositol-anchor biosynthesis. Functionally, ethanolamine phosphate transferase involved in glycosylphosphatidylinositol-anchor biosynthesis. Transfers ethanolamine phosphate to the first alpha-1,4-linked mannose of the glycosylphosphatidylinositol precursor of GPI-anchor. This Chaetomium globosum (strain ATCC 6205 / CBS 148.51 / DSM 1962 / NBRC 6347 / NRRL 1970) (Soil fungus) protein is GPI ethanolamine phosphate transferase 1 (MCD4).